The primary structure comprises 331 residues: QSPINIVSYDAKFRQRLPKLKFKPHMEKLKTEVTNHQNRAPEFEPEDGENLYVKLNNLVDGHYKFHNLHVHNGRTRRKGSEHSVNGRFTPMEAHLVFHHDDQTHFEPTRTKLGGAFPGHNDFVVVGVFLEVGDDGFGDEPDDEECKRILKGHHPDNNENGNGDNGNNGYNGDNGNNGDNGNNGYNGDNGNNGDNGNNGYNGDNGNNGDNGNNGENGNNGENGNNGENGNNGENGHKHGCRVKKAKHLSTILECAYRNDKVREFKKVGEEEGLDVHLTPEMPLPPLKNRHYYTYEGSLTTPPCTESVLWVVQKCHVQVSRRVLHALRNVEGY.

In terms of domain architecture, Alpha-carbonic anhydrase spans 1–331; sequence QSPINIVSYD…LHALRNVEGY (331 aa). Residues His-69, His-71, and His-94 each coordinate Zn(2+). Residues 138–240 form a disordered region; it reads DEPDDEECKR…GENGHKHGCR (103 aa). Residues 144–156 are compositionally biased toward basic and acidic residues; it reads ECKRILKGHHPDN. Positions 157–232 are enriched in low complexity; the sequence is NENGNGDNGN…NNGENGNNGE (76 aa). 24 consecutive repeat copies span residues 162–164, 165–167, 168–170, 171–173, 174–176, 177–179, 180–182, 183–185, 186–188, 189–191, 192–194, 195–197, 198–200, 201–203, 204–206, 207–209, 210–212, 213–215, 216–218, 219–221, 222–224, 225–227, 228–229, and 231–233. Residues 162–233 are 24 X 3 AA approximate tandem repeats of G-X-N; it reads GDNGNNGYNG…NGENGNNGEN (72 aa). 298–299 provides a ligand contact to substrate; it reads TT.

This sequence belongs to the alpha-carbonic anhydrase family. As to quaternary structure, homooligomer; disulfide-linked. May also be disulfide-linked to insoluble organic matrix. The cofactor is Zn(2+). In terms of tissue distribution, expressed in the mantle.

Its subcellular location is the secreted. It localises to the extracellular space. The protein localises to the extracellular matrix. The enzyme catalyses hydrogencarbonate + H(+) = CO2 + H2O. Its function is as follows. Acts as a negative regulator for calcification in the shells of mollusks. May function both as a calcium concentrator and as a carbonic anhydrase required for production of carbonate ions, which are assembled to CaCO(3) at mineralization sites. Is important for shell formation in both the calcitic prismatic layer and the aragonitic nacreous layer. Shows inhibitory activity of crystal formation when present in free state but, when attached to the insoluble matrix, may regulate the form and size of aragonite crystal. In Mizuhopecten yessoensis (Japanese scallop), this protein is Nacrein-like protein P1.